Reading from the N-terminus, the 425-residue chain is Serine--tRNA ligase (425 aa).

Residue 230-232 participates in L-serine binding; that stretch reads TAE. ATP is bound at residue 261-263; sequence RSE. Residue Glu-284 coordinates L-serine. Residue 348–351 participates in ATP binding; that stretch reads EISS. Ser-384 is a binding site for L-serine.

It belongs to the class-II aminoacyl-tRNA synthetase family. Type-1 seryl-tRNA synthetase subfamily. In terms of assembly, homodimer. The tRNA molecule binds across the dimer.

It is found in the cytoplasm. It carries out the reaction tRNA(Ser) + L-serine + ATP = L-seryl-tRNA(Ser) + AMP + diphosphate + H(+). The catalysed reaction is tRNA(Sec) + L-serine + ATP = L-seryl-tRNA(Sec) + AMP + diphosphate + H(+). It participates in aminoacyl-tRNA biosynthesis; selenocysteinyl-tRNA(Sec) biosynthesis; L-seryl-tRNA(Sec) from L-serine and tRNA(Sec): step 1/1. Catalyzes the attachment of serine to tRNA(Ser). Is also able to aminoacylate tRNA(Sec) with serine, to form the misacylated tRNA L-seryl-tRNA(Sec), which will be further converted into selenocysteinyl-tRNA(Sec). In Streptococcus gordonii (strain Challis / ATCC 35105 / BCRC 15272 / CH1 / DL1 / V288), this protein is Serine--tRNA ligase.